We begin with the raw amino-acid sequence, 1002 residues long: Calmin (1002 aa).

The actin-binding stretch occupies residues 1-288; that stretch reads MAAHEWDWFQ…IMTYVAQFLE (288 aa). One can recognise a Calponin-homology (CH) 1 domain in the interval 32–139; it reads NVQKRTFTRW…LIWNIILFFQ (108 aa). Positions 149-168 are enriched in low complexity; it reads RNSPSSSLSPGSGGTDSDSS. Positions 149-180 are disordered; it reads RNSPSSSLSPGSGGTDSDSSFPPTPTAERSVA. One can recognise a Calponin-homology (CH) 2 domain in the interval 187–291; it reads RKAIKALLAW…YVAQFLERFP (105 aa). Phosphoserine occurs at positions 301 and 402. Disordered stretches follow at residues 389–418, 500–532, 581–716, and 749–911; these read QGGP…GRSN, NNNS…GENT, NKVP…SPPL, and DLKN…DSSI. Over residues 396-409 the composition is skewed to low complexity; the sequence is SDISEPSPESSILS. Positions 500–509 are enriched in polar residues; it reads NNNSQSSSCN. Residues 585–606 show a composition bias toward basic and acidic residues; it reads SPHETKPDEDAEAFENHAEKLG. Residues 607–617 show a composition bias toward basic residues; sequence KRSIKSAHKKK. Basic and acidic residues-rich tracts occupy residues 618–635 and 650–659; these read DSPE…HQDS and PVDKKPEVHE. Phosphoserine is present on serine 619. Positions 681–697 are enriched in low complexity; sequence GVGEELSSSPPSSCVSL. Threonine 699 is subject to Phosphothreonine. Phosphoserine is present on residues serine 713 and serine 769. Low complexity predominate over residues 776–794; the sequence is GSQSSSSSSVPGESLPSAS. The span at 818-834 shows a compositional bias: basic and acidic residues; sequence PHEDHQQRETKENDPMD. The segment covering 835–846 has biased composition (polar residues); sequence SHQSQESPNLEN. Phosphoserine is present on residues serine 838 and serine 841. Over residues 854 to 863 the composition is skewed to basic and acidic residues; it reads NVTKESISSK. The segment covering 898 to 910 has biased composition (polar residues); sequence YSIPSRTSHSDSS. Serine 907 carries the phosphoserine modification. The helical; Anchor for type IV membrane protein transmembrane segment at 977–997 threads the bilayer; it reads MMYFILFLWLLVYCLLLFPQL.

As to expression, widely expressed at intermediate level.

The protein localises to the membrane. The chain is Calmin (CLMN) from Homo sapiens (Human).